A 484-amino-acid chain; its full sequence is 1,4-beta-D-glucan cellobiohydrolase CEL6A (484 aa).

The signal sequence occupies residues 1–17; that stretch reads MAKRLLLTAALAATTLA. The CBM1 domain occupies 26–62; sequence NCGSVWSQCGGQGWTGATCCASGSTCVAQNQWYSQCL. Cystine bridges form between Cys-34/Cys-51 and Cys-45/Cys-61. Residues 68 to 98 are disordered; the sequence is TTTAQAPSSTRTTTSSSSRPTSSSISTSAVN. Residues Trp-171 and Asp-173 each contribute to the substrate site. The N-linked (GlcNAc...) asparagine glycan is linked to Asn-175. Positions 208–230 are substrate binding loop 1; sequence YDLPDRDCAAAASNGEWAIADGG. Catalysis depends on Asp-260, which acts as the Proton donor. Substrate is bound by residues His-305, Trp-308, Asn-344, Trp-405, Lys-433, and Glu-437. The interval 431 to 469 is substrate binding loop 2; sequence WIKPGGECDGTSDTTAARYDHHCGFADALKPAPEAGQWF. Catalysis depends on Asp-439, which acts as the Proton acceptor.

The protein belongs to the glycosyl hydrolase 6 (cellulase B) family. In terms of assembly, monomer. Post-translationally, both N- and O-glycosylated.

The protein resides in the secreted. The enzyme catalyses Hydrolysis of (1-&gt;4)-beta-D-glucosidic linkages in cellulose and cellotetraose, releasing cellobiose from the non-reducing ends of the chains.. Functionally, exoglucanase that plays an important function in biomass degradation by catalyzing the hydrolysis of the non-reducing end beta-1,4-glucosidic linkages in cellulose and cellotetraose to release cellobiose. Hydrolyzes crystalline and amorphous cellulose but is inactive on hydroxyethyl cellulose, mannan, galactomannan, xyloglucan, arabinoxylan, arabinan, xylan, and pectin. The polypeptide is 1,4-beta-D-glucan cellobiohydrolase CEL6A (Podospora anserina (strain S / ATCC MYA-4624 / DSM 980 / FGSC 10383) (Pleurage anserina)).